A 234-amino-acid polypeptide reads, in one-letter code: Phosphoribosylaminoimidazole-succinocarboxamide synthase (234 aa).

It belongs to the SAICAR synthetase family.

The enzyme catalyses 5-amino-1-(5-phospho-D-ribosyl)imidazole-4-carboxylate + L-aspartate + ATP = (2S)-2-[5-amino-1-(5-phospho-beta-D-ribosyl)imidazole-4-carboxamido]succinate + ADP + phosphate + 2 H(+). It participates in purine metabolism; IMP biosynthesis via de novo pathway; 5-amino-1-(5-phospho-D-ribosyl)imidazole-4-carboxamide from 5-amino-1-(5-phospho-D-ribosyl)imidazole-4-carboxylate: step 1/2. This Streptococcus uberis (strain ATCC BAA-854 / 0140J) protein is Phosphoribosylaminoimidazole-succinocarboxamide synthase.